We begin with the raw amino-acid sequence, 411 residues long: O-glucosyltransferase rumi (411 aa).

The signal sequence occupies residues 1 to 20; the sequence is MLINHLIVVLLISLVGTGGA. Disulfide bonds link Cys-64/Cys-75, Cys-73/Cys-378, Cys-120/Cys-126, and Cys-282/Cys-305. Asp-151 (proton donor/acceptor) is an active-site residue. Residues 192–197 are interaction with the consensus sequence C-X-S-X-[PA]-C in peptide substrates; sequence ATKLHP. UDP-alpha-D-glucose-binding positions include 229 to 233, Arg-237, 276 to 278, and 294 to 298; these read RGSRT, VSF, and AASFR. Residues 408–411 carry the Prevents secretion from ER motif; that stretch reads KDEL.

The protein belongs to the glycosyltransferase 90 family.

Its subcellular location is the endoplasmic reticulum lumen. It participates in protein modification; protein glycosylation. Protein O-glucosyltransferase. Catalyzes the reaction that attaches glucose through an O-glycosidic linkage to a conserved serine residue found in the consensus sequence C-X-S-X-[PA]-C in epidermal growth factor-like repeats. Regulates Notch signaling by glucosylating Notch in the ER, glucosylation is required for the correct folding and cleavage of Notch. In Drosophila melanogaster (Fruit fly), this protein is O-glucosyltransferase rumi.